The sequence spans 4467 residues: Protocadherin-like protein (4467 aa).

The N-terminal stretch at 1–22 (MRGINAIVGFLLCFCLLHRINT) is a signal peptide. Cadherin domains lie at 23-128 (AVQF…SPTF), 129-238 (PQHL…SPVF), 239-350 (EKKS…VPVF), 351-455 (QEES…TPVF), 459-566 (NPQQ…NPDF), 567-664 (SKVV…PPTF), 665-764 (KNAP…PPTF), 765-884 (SRSS…SPEF), 885-994 (SQTS…PPLF), 1092-1197 (EAQP…QPRF), 1290-1395 (SRTV…SPKF), 1396-1499 (SADS…PPKF), 1495-1597 (GPPK…EPQF), 1601-1701 (SNGF…QPVR), 1793-1891 (TMID…KPQF), 1892-1992 (SESA…YPKF), 1993-2100 (EPNL…KPQF), 2101-2202 (LESD…RPVF), 2203-2312 (TDCP…FPFF), 2313-2423 (LTRT…PPAF), 2425-2529 (PSAV…TPTF), 2530-2639 (KLEE…PPIF), 2640-2746 (PKPS…IPKF), 2747-2849 (DNLI…SPYF), 2850-2954 (PNPP…APVF), 2955-3062 (NPRE…PPVF), 3063-3170 (VPAE…GPWF), and 3173-3288 (RYYE…EPFD). Topologically, residues 23-4258 (AVQFKQEILE…RPSSRWANPA (4236 aa)) are extracellular. In terms of domain architecture, EGF-like 1 spans 3551-3589 (PDINCTTGTPCLHGGTCHNAVPKGIICECGRDYLGPECQ). Disulfide bonds link Cys-3555/Cys-3567, Cys-3561/Cys-3577, Cys-3579/Cys-3588, Cys-3762/Cys-3788, Cys-3794/Cys-3803, Cys-3797/Cys-3812, and Cys-3814/Cys-3823. The Laminin G-like 1 domain maps to 3590–3788 (STTRTFRGNS…LKEVNTELGC (199 aa)). Residues 3790 to 3824 (LNNQCPNCNGRGYCEPFWNYAICVCDLGFGGANCD) enclose the EGF-like 2 domain. The region spanning 3842–4096 (VKQVKRKRRE…KVIISSSGGS (255 aa)) is the Laminin G-like 2 domain. A disordered region spans residues 4089–4118 (IISSSGGSVSGGSGGASGGSGGASGSGGSV). Gly residues predominate over residues 4096 to 4118 (SVSGGSGGASGGSGGASGSGGSV). One can recognise an EGF-like 3 domain in the interval 4206–4238 (PCGSNFCRHGGTCVSADPPYCLCPVGWSGPVCE). Cystine bridges form between Cys-4207/Cys-4218, Cys-4212/Cys-4226, and Cys-4228/Cys-4237. A helical membrane pass occupies residues 4259–4279 (VIACILVILLAILVIIGAVLL). The Cytoplasmic portion of the chain corresponds to 4280-4467 (KRRPQPAVVA…NLNRIFNEDE (188 aa)). Residues 4424 to 4445 (DVDDLSELGDSDEEPDEEEEQE) form a disordered region.

In terms of tissue distribution, component of the acid-insoluble organic matrix of the aragonitic skeleton (at protein level).

The protein resides in the membrane. This Acropora millepora (Staghorn coral) protein is Protocadherin-like protein.